The primary structure comprises 118 residues: 5-hydroxyisourate hydrolase (118 aa).

Positions 11, 51, and 115 each coordinate substrate.

It belongs to the transthyretin family. 5-hydroxyisourate hydrolase subfamily. In terms of assembly, homotetramer.

Its subcellular location is the peroxisome. The catalysed reaction is 5-hydroxyisourate + H2O = 5-hydroxy-2-oxo-4-ureido-2,5-dihydro-1H-imidazole-5-carboxylate + H(+). The protein operates within purine metabolism; urate degradation; (S)-allantoin from urate: step 2/3. Catalyzes the hydrolysis of 5-hydroxyisourate (HIU) to 2-oxo-4-hydroxy-4-carboxy-5-ureidoimidazoline (OHCU). The protein is 5-hydroxyisourate hydrolase (Urah) of Mus musculus (Mouse).